We begin with the raw amino-acid sequence, 507 residues long: GMP synthase [glutamine-hydrolyzing] (507 aa).

Positions 3-190 (KILVIDYGSQ…IQGICGLKGS (188 aa)) constitute a Glutamine amidotransferase type-1 domain. Residue Cys-77 is the Nucleophile of the active site. Active-site residues include His-164 and Glu-166. Positions 191–382 (WTLMDFVENK…LGLPREILYR (192 aa)) constitute a GMPS ATP-PPase domain. Residue 218 to 224 (SGGVDSS) coordinates ATP.

As to quaternary structure, homodimer.

The catalysed reaction is XMP + L-glutamine + ATP + H2O = GMP + L-glutamate + AMP + diphosphate + 2 H(+). Its pathway is purine metabolism; GMP biosynthesis; GMP from XMP (L-Gln route): step 1/1. Functionally, catalyzes the synthesis of GMP from XMP. The sequence is that of GMP synthase [glutamine-hydrolyzing] from Petrotoga mobilis (strain DSM 10674 / SJ95).